The following is a 99-amino-acid chain: High mobility group nucleosome-binding domain-containing protein 3 (99 aa).

3 stretches are compositionally biased toward basic and acidic residues: residues 1–25, 39–53, and 62–72; these read MPKR…EPTR, PEPK…KEPG, and GKKEEKQEAGK. Residues 1–99 form a disordered region; it reads MPKRKSPENT…KTESVDNEGE (99 aa). At S6 the chain carries Phosphoserine. T10 is subject to Phosphothreonine. Residues S78 and S93 each carry the phosphoserine modification. A compositionally biased stretch (basic and acidic residues) spans 81 to 93; sequence GETKAEEAQKTES.

This sequence belongs to the HMGN family. Interacts with the ligand binding domain of the thyroid receptor (TR) (in vitro). Requires the presence of thyroid hormone for its interaction. Interacts with transcriptional regulator SEHBP. Interacts with nucleosomes.

The protein resides in the nucleus. Its function is as follows. Binds to nucleosomes, regulating chromatin structure and consequently, chromatin-dependent processes such as transcription, DNA replication and DNA repair. Affects both insulin and glucagon levels and modulates the expression of pancreatic genes involved in insulin secretion. Regulates the expression of the glucose transporter SLC2A2 by binding specifically to its promoter region and recruiting PDX1 and additional transcription factors. Regulates the expression of SLC6A9, a glycine transporter which regulates the glycine concentration in synaptic junctions in the central nervous system, by binding to its transcription start site. May play a role in ocular development and astrocyte function. The chain is High mobility group nucleosome-binding domain-containing protein 3 (HMGN3) from Pongo abelii (Sumatran orangutan).